The following is a 245-amino-acid chain: tRNA (guanine-N(1)-)-methyltransferase (245 aa).

S-adenosyl-L-methionine is bound by residues glycine 114 and 133 to 138; that span reads LGDFVI.

Belongs to the RNA methyltransferase TrmD family. In terms of assembly, homodimer.

It is found in the cytoplasm. It catalyses the reaction guanosine(37) in tRNA + S-adenosyl-L-methionine = N(1)-methylguanosine(37) in tRNA + S-adenosyl-L-homocysteine + H(+). Its function is as follows. Specifically methylates guanosine-37 in various tRNAs. In Pediococcus pentosaceus (strain ATCC 25745 / CCUG 21536 / LMG 10740 / 183-1w), this protein is tRNA (guanine-N(1)-)-methyltransferase.